The sequence spans 117 residues: UPF0295 protein GK0479 (117 aa).

The next 2 membrane-spanning stretches (helical) occupy residues 12–32 (IRTF…LGLF) and 42–62 (LFML…FWIG).

Belongs to the UPF0295 family.

The protein localises to the cell membrane. The protein is UPF0295 protein GK0479 of Geobacillus kaustophilus (strain HTA426).